The primary structure comprises 752 residues: Sialidase 85-1.1 (752 aa).

Positions 1–23 (MSRRVFASAVLLLIVVTMCCGGA) are cleaved as a signal peptide. BNR repeat units follow at residues 274–285 (IYSKDNGSTWSL) and 319–330 (YVSRDMGTTWTE). The interval 693 to 725 (APEPQVKIAPKPAAPAAPAGNEETARETGDGGA) is disordered. Positions 701–711 (APKPAAPAAPA) are enriched in low complexity.

It belongs to the glycosyl hydrolase 33 family.

It carries out the reaction Hydrolysis of alpha-(2-&gt;3)-, alpha-(2-&gt;6)-, alpha-(2-&gt;8)- glycosidic linkages of terminal sialic acid residues in oligosaccharides, glycoproteins, glycolipids, colominic acid and synthetic substrates.. Functionally, developmentally regulated neuraminidase implicated in parasite invasion of cells. May contribute to the pathology during T.cruzi infection by cleaving sialic acid from cells of the immune system. The sequence is that of Sialidase 85-1.1 (SA85-1.1) from Trypanosoma cruzi.